A 1115-amino-acid chain; its full sequence is MEENSSELDSNNFNVLVDNLAGLSLTDEEVRRILSPRKEGSRQLPSSTSKDEDSEEASHKYDFEIDRDSLKSDSGSPRLHQNATAPTSSTPLQSPDESVNKLNSEDEEGNSSVAPFFLDTTNFDRLNDNITTDDEQLSPVLTANQGFQSQEQYEEDSYNNYDYTSDPSSPNYISSSLDQLPHLDDEDDLQLTPIKEERNYLHSQDAPTTNALSKKISDILIPASAMKDLKDRKNALAKEFEESQPGSSLTLKEQANVIDNLRKEVFGLKLKCYFLYDQLNKFHDQEVQDIMKQNIDLKTLTMELQRAVAGYEKKISGLESRIKPDQSFNLSTPSPAPSNLITLQSRYSQALSELETTKRAFAALRKEKSKKTNYSVGAYNEDRNVLSNMLDNERREKEALLQELESLRVQLSKKVPMPAKNTDERVIETLQRSNELLRMDISMQNEALLLRKQENDRLVKQVEELTVALNSGKMNAIVEAESSKNELWDSMMVSRMKTQEQSIELTRLYKQLQDIEEDYENKLMRMEQQWREDVDQLQEYVEEITQELQDTKEVLSKSSKESDDYEEVVGKLRTEAEREIEKFEKTIRENEESISLFKEEVEKLTDEITQLSERYNDKCHEFDELQKRLQTLEEENNKAKEDSTSKTSNLLEQLKMTEAEVDSLRKENEENKQVIALKESELVKSNDNKLLLNEQIESLNDQLSQLKTEMESVTTSKESLADYLSNLKERHNDELDSLNKKLREFEGILSSNSSLKSEIEERNNQYVTLRENFDSLQNAIMETFDKQVTHCSVNHLVQQIRKLKDENKKDQSGTDKLMKKIYHCEQSLKEKTNSLETLVSEKKELKNLLDAERRSKKAIQLELENLSSQAFRRNLSGSSSPSERSQSRELKLLQASEKRLKEQVEERNSLIKNIVTRFTQLNTGSKPVNTNVEALTTISSMNQAVNMNFRELDKSIQEFKRKCQSMEREFKTELRKLDGVLEARSKRLSQLEERVKLLGAGSTSSIPNSPRASKRVSLDSEDKKLVPASPDKSAVQRGITALKRDAEGMSHIWQLRLREMEFQLKAEQEGRKRDKLGARERLQDLIRQNRSLSRQIKTDKESNSRSPSISSQEHK.

The segment at 25-180 is disordered; that stretch reads LTDEEVRRIL…NYISSSLDQL (156 aa). 2 stretches are compositionally biased toward basic and acidic residues: residues 28-41 and 56-71; these read EEVR…KEGS and EASH…DSLK. Composition is skewed to polar residues over residues 72 to 102, 119 to 130, and 139 to 151; these read SDSG…VNKL, DTTNFDRLNDNI, and PVLT…QSQE. Ser-94 is subject to Phosphoserine. Over residues 165 to 176 the composition is skewed to low complexity; the sequence is SDPSSPNYISSS. The stretch at 445–915 forms a coiled coil; the sequence is NEALLLRKQE…ERNSLIKNIV (471 aa). Positions 523–537 are required for interaction with mto2; it reads LMRMEQQWREDVDQL. Polar residues predominate over residues 1001–1011; it reads GSTSSIPNSPR. Disordered stretches follow at residues 1001–1037 and 1067–1115; these read GSTS…AVQR and EQEG…QEHK. 2 positions are modified to phosphoserine: Ser-1005 and Ser-1009. Basic and acidic residues-rich tracts occupy residues 1016-1025 and 1067-1084; these read VSLDSEDKKL and EQEG…RLQD. Residues 1072-1102 adopt a coiled-coil conformation; that stretch reads KRDKLGARERLQDLIRQNRSLSRQIKTDKES. Polar residues-rich tracts occupy residues 1086–1095 and 1104–1115; these read IRQNRSLSRQ and SRSPSISSQEHK.

As to quaternary structure, interacts with mto2; the interaction is direct and required for efficient binding to the gamma-tubulin complex. Interacts with gamma tubulin complex subunits alp4, alp6 and gtb1. Interacts with mcp6.

It localises to the cytoplasm. It is found in the cytoskeleton. The protein localises to the microtubule organizing center. The protein resides in the spindle pole body. Its function is as follows. Spindle pole body (SPB) component that acts as the gamma-tubulin complex-binding protein of the SPB outer plaque. Promotes nucleation of all cytoplasmic microtubules by recruiting the gamma-tubulin complex to the spindle pole body (SPB), to the interphase microtubule organizing center (iMTOC), and to the equatorial MTOC (eMTOC) during anaphase. The chain is Gamma tubulin complex adapter mto1 from Schizosaccharomyces pombe (strain 972 / ATCC 24843) (Fission yeast).